The following is a 189-amino-acid chain: Pyridoxal 5'-phosphate synthase subunit PdxT (189 aa).

47–49 (GES) serves as a coordination point for L-glutamine. Catalysis depends on cysteine 79, which acts as the Nucleophile. Residues arginine 105 and 132–133 (IR) contribute to the L-glutamine site. Catalysis depends on charge relay system residues histidine 168 and glutamate 170.

The protein belongs to the glutaminase PdxT/SNO family. In terms of assembly, in the presence of PdxS, forms a dodecamer of heterodimers. Only shows activity in the heterodimer.

It catalyses the reaction aldehydo-D-ribose 5-phosphate + D-glyceraldehyde 3-phosphate + L-glutamine = pyridoxal 5'-phosphate + L-glutamate + phosphate + 3 H2O + H(+). The catalysed reaction is L-glutamine + H2O = L-glutamate + NH4(+). Its pathway is cofactor biosynthesis; pyridoxal 5'-phosphate biosynthesis. In terms of biological role, catalyzes the hydrolysis of glutamine to glutamate and ammonia as part of the biosynthesis of pyridoxal 5'-phosphate. The resulting ammonia molecule is channeled to the active site of PdxS. This is Pyridoxal 5'-phosphate synthase subunit PdxT from Methanocorpusculum labreanum (strain ATCC 43576 / DSM 4855 / Z).